The following is a 595-amino-acid chain: Beta-(1--&gt;2)glucan export ATP-binding/permease protein NdvA (595 aa).

5 helical membrane passes run phenylalanine 21 to leucine 41, leucine 56 to valine 76, isoleucine 129 to proline 149, leucine 158 to glutamine 178, and isoleucine 252 to valine 272. Residues phenylalanine 21–serine 301 form the ABC transmembrane type-1 domain. The 235-residue stretch at isoleucine 335–arginine 569 folds into the ABC transporter domain. Glycine 368 to threonine 375 serves as a coordination point for ATP.

This sequence belongs to the ABC transporter superfamily. Beta-(1--&gt;2)glucan exporter (TC 3.A.1.108.1) family. Homodimer.

It is found in the cell inner membrane. It carries out the reaction [(1-&gt;2)-beta-D-glucosyl](n)(in) + ATP + H2O = [(1-&gt;2)-beta-D-glucosyl](n)(out) + ADP + phosphate + H(+). Its function is as follows. Involved in beta-(1--&gt;2)glucan export. Transmembrane domains (TMD) form a pore in the inner membrane and the ATP-binding domain (NBD) is responsible for energy generation. The chain is Beta-(1--&gt;2)glucan export ATP-binding/permease protein NdvA from Bartonella bacilliformis.